The primary structure comprises 213 residues: Orotate phosphoribosyltransferase (213 aa).

A 5-phospho-alpha-D-ribose 1-diphosphate-binding site is contributed by K26. Residue 34-35 (FF) participates in orotate binding. 5-phospho-alpha-D-ribose 1-diphosphate-binding positions include 72-73 (YK), R99, K100, K103, H105, and 124-132 (DDVITAGTA). Orotate contacts are provided by T128 and R156.

The protein belongs to the purine/pyrimidine phosphoribosyltransferase family. PyrE subfamily. In terms of assembly, homodimer. The cofactor is Mg(2+).

The catalysed reaction is orotidine 5'-phosphate + diphosphate = orotate + 5-phospho-alpha-D-ribose 1-diphosphate. The protein operates within pyrimidine metabolism; UMP biosynthesis via de novo pathway; UMP from orotate: step 1/2. Its function is as follows. Catalyzes the transfer of a ribosyl phosphate group from 5-phosphoribose 1-diphosphate to orotate, leading to the formation of orotidine monophosphate (OMP). The chain is Orotate phosphoribosyltransferase from Vibrio parahaemolyticus serotype O3:K6 (strain RIMD 2210633).